The chain runs to 437 residues: Putative permease IIC component (437 aa).

The PTS EIIC type-2 domain maps to 2–437 (FDYILSLGGT…LFLRKRELSE (436 aa)). A run of 12 helical transmembrane segments spans residues 5–25 (ILSL…GLIF), 35–55 (AGVT…MAID), 88–108 (ATAI…AMLV), 134–154 (LMTG…ALSL), 173–193 (ISIP…LDAI), 215–235 (GMVG…GLAA), 236–256 (GEGF…MVLF), 302–322 (TIAV…ILPG), 325–345 (VLPL…TVIH), 354–374 (ISGV…APYF), 385–405 (FAGE…GWSI), and 410–430 (SLGI…VLFL).

It is found in the cell inner membrane. In terms of biological role, the phosphoenolpyruvate-dependent sugar phosphotransferase system (PTS), a major carbohydrate active -transport system, catalyzes the phosphorylation of incoming sugar substrates concomitant with their translocation across the cell membrane. The polypeptide is Putative permease IIC component (sgcC) (Escherichia coli (strain K12)).